The following is a 325-amino-acid chain: Phospho-N-acetylmuramoyl-pentapeptide-transferase (325 aa).

10 helical membrane-spanning segments follow: residues 3–23, 48–68, 79–99, 106–126, 136–156, 174–194, 199–219, 223–243, 246–266, and 298–318; these read LMIYSVLVAFVVSLIQGPILI, GTPTMGGVIFIISSVITVFVV, AIFAFVAFGIIGLIDDSLKII, LKAYQKMILLLIVSSIIGFYA, IIVPFVHKTWNLGMFYIPFII, GLATSITLLVMTFFAVVSYAT, LAVFCSIVAGALLGFLKYNAY, VFMGDTGSLALGGVVGAVAMM, LPLIVIIVGGIYLAEALSVIL, and IVSIFSIITVILCLIGFLSLI.

It belongs to the glycosyltransferase 4 family. MraY subfamily. Requires Mg(2+) as cofactor.

The protein resides in the cell membrane. The enzyme catalyses UDP-N-acetyl-alpha-D-muramoyl-L-alanyl-gamma-D-glutamyl-meso-2,6-diaminopimeloyl-D-alanyl-D-alanine + di-trans,octa-cis-undecaprenyl phosphate = di-trans,octa-cis-undecaprenyl diphospho-N-acetyl-alpha-D-muramoyl-L-alanyl-D-glutamyl-meso-2,6-diaminopimeloyl-D-alanyl-D-alanine + UMP. It participates in cell wall biogenesis; peptidoglycan biosynthesis. Its function is as follows. Catalyzes the initial step of the lipid cycle reactions in the biosynthesis of the cell wall peptidoglycan: transfers peptidoglycan precursor phospho-MurNAc-pentapeptide from UDP-MurNAc-pentapeptide onto the lipid carrier undecaprenyl phosphate, yielding undecaprenyl-pyrophosphoryl-MurNAc-pentapeptide, known as lipid I. This is Phospho-N-acetylmuramoyl-pentapeptide-transferase from Clostridium novyi (strain NT).